The chain runs to 60 residues: Large ribosomal subunit protein uL30 (60 aa).

This sequence belongs to the universal ribosomal protein uL30 family. As to quaternary structure, part of the 50S ribosomal subunit.

The chain is Large ribosomal subunit protein uL30 from Leuconostoc mesenteroides subsp. mesenteroides (strain ATCC 8293 / DSM 20343 / BCRC 11652 / CCM 1803 / JCM 6124 / NCDO 523 / NBRC 100496 / NCIMB 8023 / NCTC 12954 / NRRL B-1118 / 37Y).